Consider the following 574-residue polypeptide: Putative DNA-directed RNA polymerase subunit alpha-like 1 (574 aa).

Residues 1–352 (MTNNKNFADW…ELFSLFLQTS (352 aa)) are alpha N-terminal domain (alpha-NTD). The alpha C-terminal domain (alpha-CTD) stretch occupies residues 419 to 574 (PDYDRYNSIT…RERKRGNREF (156 aa)). The interval 534–574 (QETLRKEQDEQSSQQQKDQMEKRRWERQNRERERKRGNREF) is disordered. Residues 551 to 574 (DQMEKRRWERQNRERERKRGNREF) show a composition bias toward basic and acidic residues.

The protein belongs to the RNA polymerase alpha chain family. In terms of assembly, in plastids the minimal PEP RNA polymerase catalytic core is composed of four subunits: alpha, beta, beta', and beta''. When a (nuclear-encoded) sigma factor is associated with the core the holoenzyme is formed, which can initiate transcription.

The protein resides in the plastid. It localises to the chloroplast. The enzyme catalyses RNA(n) + a ribonucleoside 5'-triphosphate = RNA(n+1) + diphosphate. Its function is as follows. DNA-dependent RNA polymerase catalyzes the transcription of DNA into RNA using the four ribonucleoside triphosphates as substrates. The chain is Putative DNA-directed RNA polymerase subunit alpha-like 1 (rpoAL1-A) from Pelargonium hortorum (Common geranium).